Reading from the N-terminus, the 143-residue chain is Small ribosomal subunit protein uS9 (143 aa).

The interval 124–143 (PEPKKFGGKGARARFQKSYR) is disordered. The segment covering 134–143 (ARARFQKSYR) has biased composition (basic residues).

Belongs to the universal ribosomal protein uS9 family.

The protein is Small ribosomal subunit protein uS9 (RPS16) of Candida glabrata (strain ATCC 2001 / BCRC 20586 / JCM 3761 / NBRC 0622 / NRRL Y-65 / CBS 138) (Yeast).